A 179-amino-acid polypeptide reads, in one-letter code: Large ribosomal subunit protein uL6 (179 aa).

Belongs to the universal ribosomal protein uL6 family. As to quaternary structure, part of the 50S ribosomal subunit.

This protein binds to the 23S rRNA, and is important in its secondary structure. It is located near the subunit interface in the base of the L7/L12 stalk, and near the tRNA binding site of the peptidyltransferase center. This is Large ribosomal subunit protein uL6 from Rhodococcus opacus (strain B4).